The sequence spans 214 residues: Pyrrolidone-carboxylate peptidase (214 aa).

Catalysis depends on residues Glu-79, Cys-142, and His-166.

This sequence belongs to the peptidase C15 family. As to quaternary structure, homotetramer.

The protein localises to the cytoplasm. It catalyses the reaction Release of an N-terminal pyroglutamyl group from a polypeptide, the second amino acid generally not being Pro.. In terms of biological role, removes 5-oxoproline from various penultimate amino acid residues except L-proline. In Fusobacterium nucleatum subsp. nucleatum (strain ATCC 25586 / DSM 15643 / BCRC 10681 / CIP 101130 / JCM 8532 / KCTC 2640 / LMG 13131 / VPI 4355), this protein is Pyrrolidone-carboxylate peptidase.